The following is a 175-amino-acid chain: Large ribosomal subunit protein uL6 (175 aa).

It belongs to the universal ribosomal protein uL6 family. Part of the 50S ribosomal subunit.

This protein binds to the 23S rRNA, and is important in its secondary structure. It is located near the subunit interface in the base of the L7/L12 stalk, and near the tRNA binding site of the peptidyltransferase center. The polypeptide is Large ribosomal subunit protein uL6 (Xylella fastidiosa (strain M12)).